The following is a 617-amino-acid chain: Hemagglutinin glycoprotein (617 aa).

The Intravirion segment spans residues 1-37 (MSPQRDRINAFDKDNPHPXXXXXXXXXXXXXXXRPYV). Residues 1 to 154 (MSPQRDRINA…RIKLDYDQYC (154 aa)) form a stalk region. The chain crosses the membrane as a helical; Signal-anchor for type II membrane protein span at residues 38–58 (LLAVLFVMFLSLIGLLAIAGI). At 59 to 617 (RFHRAAIYTA…VTREDGTNCR (559 aa)) the chain is on the virion surface side. Asn-168, Asn-187, Asn-200, Asn-215, and Asn-238 each carry an N-linked (GlcNAc...) asparagine; by host glycan. Cystine bridges form between Cys-188–Cys-606, Cys-287–Cys-300, Cys-381–Cys-494, Cys-386–Cys-394, and Cys-570–Cys-579. The interaction with host NECTIN4 receptor stretch occupies residues 458 to 543 (PMKSLALGVV…VEHAVVYYVY (86 aa)).

The protein belongs to the paramyxoviruses hemagglutinin-neuraminidase family. Non-sialidase subfamily. Homodimer; disulfide-linked. Further forms homotetramer (dimer of dimers). Interacts (via C-terminus) with human NECTIN4 (via N-terminus); this interaction allows attachment to the respiratory epithelium and viral entry. Interacts (via C-terminus) with human SLAMF1/CD150 (via N-terminus); this interaction allows attachment and viral entry into the CD150-expressing immune cells.

Its subcellular location is the virion membrane. It is found in the host cell membrane. In terms of biological role, attaches the virus to the human SLAMF1/CD150 receptor for entry into host dendritic cells, macrophages, activated memory T cells and naive or memory B cells, thereby explaining the long immunosuppression that follows infection. In the respiratory airways, binds to the NECTIN4 receptor for entry into the host cell. Binding of H protein to the receptor induces a conformational change that allows the F protein to trigger virion/cell membranes fusion. The vaccine and laboratory-adapted strains use host CD46 as an alternate receptor. The high degree of interaction between H and CD46 results in down-regulation of the latter from the surface of infected cells, rendering them more sensitive to c3b-mediated complement lysis. This is Hemagglutinin glycoprotein (H) from Homo sapiens (Human).